The chain runs to 179 residues: UPF0227 protein Sbal_2415 (179 aa).

It belongs to the UPF0227 family.

The sequence is that of UPF0227 protein Sbal_2415 from Shewanella baltica (strain OS155 / ATCC BAA-1091).